Reading from the N-terminus, the 363-residue chain is Isopentenyl-diphosphate delta-isomerase (363 aa).

Residue 6–7 participates in substrate binding; sequence RK. Residues 64-66, Ser94, and Asn123 each bind FMN; that span reads AMT. A substrate-binding site is contributed by Gln153. Glu154 provides a ligand contact to Mg(2+). Residues Lys185, Ser210, Thr215, 259 to 261, and 280 to 281 contribute to the FMN site; these read GVR and SA.

This sequence belongs to the IPP isomerase type 2 family. Homooctamer. Dimer of tetramers. It depends on Mg(2+) as a cofactor. FMN is required as a cofactor. The cofactor is NADPH.

Its subcellular location is the cytoplasm. It catalyses the reaction isopentenyl diphosphate = dimethylallyl diphosphate. Functionally, involved in the biosynthesis of isoprenoids. Catalyzes the 1,3-allylic rearrangement of the homoallylic substrate isopentenyl (IPP) to its allylic isomer, dimethylallyl diphosphate (DMAPP). The sequence is that of Isopentenyl-diphosphate delta-isomerase from Streptomyces sp. (strain CL190).